Consider the following 343-residue polypeptide: Serpentine receptor class alpha-11 (343 aa).

At 1 to 24 (MSSPDTPVCASPQQMEMYNSHFYT) the chain is on the extracellular side. A helical transmembrane segment spans residues 25–45 (CALFFNLLIAFTSMTLIIMAI). Residues 46–60 (RKLLTESIINTSTRM) lie on the Cytoplasmic side of the membrane. Residues 61-81 (FLIVGLLCCSLHQTAYIVLRV) traverse the membrane as a helical segment. The Extracellular portion of the chain corresponds to 82–106 (QVIFQILFKLDQPCKLYYKAYDCKY). A helical transmembrane segment spans residues 107 to 127 (VTFSLVAGNTGMIFIQSAMTI). Residues 128 to 146 (DRILTTVFTNLWPKLKYWP) lie on the Cytoplasmic side of the membrane. A helical membrane pass occupies residues 147 to 167 (GVILSSFMIGCNFTNVQFIFW). The Extracellular segment spans residues 168 to 192 (NDPLTDYVPTCGQFPPKSVGRFQKF). The helical transmembrane segment at 193–213 (LEIALYMSLAHMVINVIILYI) threads the bilayer. Over 214–247 (NVVQDRRQRLVSTHDQSQSFDVNQRFQSRVALKS) the chain is Cytoplasmic. The chain crosses the membrane as a helical span at residues 248–268 (TQAIFFLSMSQFLSCFLYTIF). The Extracellular portion of the chain corresponds to 269 to 291 (TKLYLTLQPDMTPLQSGLTLALT). The chain crosses the membrane as a helical span at residues 292 to 312 (YTTPYACIAIPSLIMVTLTFI). The Cytoplasmic segment spans residues 313-343 (RNQRHRSINALRSQTETGDQYMQKIKKIWDK).

The protein belongs to the nematode receptor-like protein sra family.

Its subcellular location is the membrane. In terms of biological role, a G protein-coupled receptor required for olfactory imprinting a requisite in ordorant response such as benzaldehyde and isoamylalcohol. This is Serpentine receptor class alpha-11 from Caenorhabditis briggsae.